Here is a 65-residue protein sequence, read N- to C-terminus: Small ribosomal subunit protein bS21A (65 aa).

It belongs to the bacterial ribosomal protein bS21 family.

This Francisella tularensis subsp. holarctica (strain LVS) protein is Small ribosomal subunit protein bS21A.